The sequence spans 108 residues: UPF0145 protein MADE_1007770 (108 aa).

This sequence belongs to the UPF0145 family.

The protein is UPF0145 protein MADE_1007770 of Alteromonas mediterranea (strain DSM 17117 / CIP 110805 / LMG 28347 / Deep ecotype).